Reading from the N-terminus, the 618-residue chain is Phosphoenolpyruvate carboxykinase [GTP] (618 aa).

Substrate is bound by residues R83 and 217–219 (YGG). Mn(2+) contacts are provided by K226 and H245. S267 contributes to the substrate binding site. 268–273 (MCGKTS) provides a ligand contact to GTP. The active site involves C269. D286 is a binding site for Mn(2+). 381-383 (NAR) is a binding site for substrate. GTP is bound by residues R383 and R415.

This sequence belongs to the phosphoenolpyruvate carboxykinase [GTP] family. The cofactor is Mn(2+).

The protein localises to the cytoplasm. It catalyses the reaction oxaloacetate + GTP = phosphoenolpyruvate + GDP + CO2. Its pathway is carbohydrate biosynthesis; gluconeogenesis. Functionally, catalyzes the conversion of oxaloacetate (OAA) to phosphoenolpyruvate (PEP), the rate-limiting step in the metabolic pathway that produces glucose from lactate and other precursors derived from the citric acid cycle. The protein is Phosphoenolpyruvate carboxykinase [GTP] of Pyrococcus abyssi (strain GE5 / Orsay).